Reading from the N-terminus, the 409-residue chain is Thiaminase-1 (409 aa).

A signal peptide spans 1-29; it reads MSKVKGFIYKPLMVMLALLLVVVSPAGAG. Catalysis depends on Cys-143, which acts as the Nucleophile. The active-site Proton acceptor is Glu-271.

As to quaternary structure, monomer.

Its subcellular location is the secreted. It carries out the reaction pyridine + thiamine = heteropyrithiamine + 5-(2-hydroxyethyl)-4-methylthiazole. Its function is as follows. Degrades thiamine by replacing its thiazole moiety with a wide range of nucleophiles. In Paenibacillus thiaminolyticus (Bacillus thiaminolyticus), this protein is Thiaminase-1.